A 291-amino-acid polypeptide reads, in one-letter code: ATP synthase gamma chain (291 aa).

The protein belongs to the ATPase gamma chain family. In terms of assembly, F-type ATPases have 2 components, CF(1) - the catalytic core - and CF(0) - the membrane proton channel. CF(1) has five subunits: alpha(3), beta(3), gamma(1), delta(1), epsilon(1). CF(0) has three main subunits: a, b and c.

The protein localises to the cell inner membrane. Its function is as follows. Produces ATP from ADP in the presence of a proton gradient across the membrane. The gamma chain is believed to be important in regulating ATPase activity and the flow of protons through the CF(0) complex. The chain is ATP synthase gamma chain from Verminephrobacter eiseniae (strain EF01-2).